A 141-amino-acid chain; its full sequence is Hemoglobin subunit alpha (141 aa).

Residues 1 to 141 (VLSAADKTNV…VSTVLTSKYR (141 aa)) form the Globin domain. S3 carries the post-translational modification Phosphoserine. Residue K7 is modified to N6-succinyllysine. At T8 the chain carries Phosphothreonine. Residue K11 is modified to N6-succinyllysine. K16 is modified (N6-acetyllysine; alternate). An N6-succinyllysine; alternate modification is found at K16. Phosphotyrosine is present on Y24. At S35 the chain carries Phosphoserine. K40 carries the N6-succinyllysine modification. The residue at position 49 (S49) is a Phosphoserine. H58 provides a ligand contact to O2. Residue H87 participates in heme b binding. S102 bears the Phosphoserine mark. The residue at position 108 (T108) is a Phosphothreonine. S124 and S131 each carry phosphoserine. A phosphothreonine mark is found at T134 and T137. S138 bears the Phosphoserine mark.

The protein belongs to the globin family. As to quaternary structure, heterotetramer of two alpha chains and two beta chains. In terms of tissue distribution, red blood cells.

Its function is as follows. Involved in oxygen transport from the lung to the various peripheral tissues. This chain is Hemoglobin subunit alpha, found in Tamiasciurus hudsonicus (American red squirrel).